Here is a 40-residue protein sequence, read N- to C-terminus: Bacterioferritin heavy chain (40 aa).

The Ferritin-like diiron domain maps to 1-40 (MRGNPEVIDYLNMLIGGELAARDQYLIHSRMYEDWGLTKY). A Fe cation-binding site is contributed by Glu18.

This sequence belongs to the bacterioferritin family. Oligomer consisting of two types of subunits: light chain and heavy chain.

May perform analogous functions in iron detoxification and storage to that of animal ferritins. Contains approximately 750 iron atoms per molecule. This Absidia spinosa protein is Bacterioferritin heavy chain.